Consider the following 625-residue polypeptide: Autophagy-related protein 13b (625 aa).

Low complexity-rich tracts occupy residues 322–332 and 455–477; these read PSVSCSPSPTR and PSGV…SSRS. 3 disordered regions span residues 322–388, 452–527, and 544–564; these read PSVS…AVPR, FRRP…YPKK, and PPLR…NNNK. Residues 498–518 are compositionally biased toward basic and acidic residues; that stretch reads ITDRNSRPGSFDHRGDIHEPF.

The protein belongs to the ATG13 family. Plant subfamily.

Its subcellular location is the cytoplasmic vesicle. The protein resides in the autophagosome. Involved in autophagy in a nutritional condition dependent manner. The ATG1-ATG13 protein kinase complex regulates downstream events required for autophagosome enclosure and/or vacuolar delivery. Becomes a target of autophagy under nutrient starvation. Connects autophagy to plant nutritional status. The chain is Autophagy-related protein 13b from Arabidopsis thaliana (Mouse-ear cress).